Reading from the N-terminus, the 481-residue chain is Guanine nucleotide exchange factor C9orf72 homolog (481 aa).

The uDENN C9ORF72-type domain occupies 23–194 (SPLLAATFAY…ELLASMRSHS (172 aa)). The cDENN C9ORF72-type domain occupies 200–343 (DIADTVLNDD…SELTAFWRAT (144 aa)). The 95-residue stretch at 370-464 (VLHRDTLVKA…IKPGLHSFIF (95 aa)) folds into the dDENN C9ORF72-type domain. The required for the homodimerization of the C9orf72-SMCR8 complex stretch occupies residues 461-481 (SFIFGRPFYTSVQERDVLMTF).

As to quaternary structure, component of the C9orf72-SMCR8 complex, at least composed of C9orf72, SMCR8 and WDR41. The complex is formed of two protomers, each individually consisting of one molecule each of C9orf72, SMCR8 and WDR41. The protomers homodimerize via an interaction between C9orf72 (via C-terminus) and SMCR8 (via N-terminus). Within each protomer SMCR8 (via DENN domain) acts as a bridging protein between WDR41 (via C-terminus and N-terminus) and C9orf72 (via C-terminus). The C9orf72-SMCR8 complex associates with the ULK1/ATG1 kinase complex. Interacts with ULK1/ATG1 kinase complex members ULK1, ATG13 and RB1CC1. Interacts with SMCR8; the interaction is direct. Interacts with HNRNPA1, HNRNPA2B1 and UBQLN2. Interacts with small Rab GTPase RAB1A; the interaction mediates recruitment of RAB1A to the ULK1/ATG1 kinase complex. Also interacts with small Rab GTPase RAB7A. Interacts with cofilin. Interacts with GTP-binding proteins ARF1 and ARF6. Interacts with the DLG4/PSD-95. Interacts with CARM1 (via PH domain-like fold). Interacts with RAB39A and RAB39B (in GDP-bound forms); functions as GEF for RAB39A and RAB39B.

Its subcellular location is the nucleus. It is found in the cytoplasm. The protein localises to the P-body. The protein resides in the stress granule. It localises to the endosome. Its subcellular location is the lysosome. It is found in the cytoplasmic vesicle. The protein localises to the autophagosome. The protein resides in the autolysosome. It localises to the secreted. Its subcellular location is the cell projection. It is found in the axon. The protein localises to the growth cone. The protein resides in the perikaryon. Its function is as follows. Acts as a guanine-nucleotide releasing factor (GEF) for Rab GTPases by promoting the conversion of inactive RAB-GDP to the active form RAB-GTP. Acts as a GEF for RAB39A which enables HOPS-mediated autophagosome-lysosome membrane tethering and fusion in mammalian autophagy. Component of the C9orf72-SMCR8 complex where both subunits display GEF activity and that regulates autophagy. As part of the C9orf72-SMCR8-WDR41 (CSW) complex, functions as GEF for RAB8A and RAB39B, thereby promoting autophagosome maturation. As part of the C9orf72-SMCR8 complex, also functions as GTPase activating protein (GAP) for RAB8A and RAB11A in vitro. The C9orf72-SMCR8 complex also acts as a regulator of autophagy initiation by interacting with the ULK1/ATG1 kinase complex and modulating its protein kinase activity. Promotes initiation of autophagy by regulating the RAB1A-dependent trafficking of the ULK1/ATG1 kinase complex to the phagophore which leads to autophagosome formation. Acts as a regulator of mTORC1 signaling by promoting phosphorylation of mTORC1 substrates. Plays a role in endosomal trafficking. May be involved in regulating the maturation of phagosomes to lysosomes. Promotes the lysosomal localization and lysosome-mediated degradation of CARM1 which leads to inhibition of starvation-induced lipid metabolism. Regulates actin dynamics in motor neurons by inhibiting the GTP-binding activity of ARF6, leading to ARF6 inactivation. This reduces the activity of the LIMK1 and LIMK2 kinases which are responsible for phosphorylation and inactivation of cofilin, leading to CFL1/cofilin activation. Positively regulates axon extension and axon growth cone size in spinal motor neurons. Required for SMCR8 protein expression and localization at pre- and post-synaptic compartments in the forebrain, also regulates protein abundance of RAB3A and GRIA1/GLUR1 in post-synaptic compartments in the forebrain and hippocampus. Plays a role within the hematopoietic system in restricting inflammation and the development of autoimmunity. The chain is Guanine nucleotide exchange factor C9orf72 homolog from Rattus norvegicus (Rat).